The sequence spans 797 residues: Trafficking protein particle complex subunit 12 (797 aa).

Disordered stretches follow at residues 1–257 and 286–338; these read META…PSLS and SNPN…VPES. Residues 9 to 23 show a composition bias toward low complexity; that stretch reads QSPSEASPSAQAGPE. Positions 29 to 43 are enriched in basic and acidic residues; sequence MSREEESQPLYHEET. The segment covering 47–58 has biased composition (acidic residues); sequence GGDEFASEENEP. Basic and acidic residues-rich tracts occupy residues 66-75 and 107-121; these read FGDKLNEHMM and ATDHRLPSSTDKEVV. A phosphoserine mark is found at S125 and S128. T130 bears the Phosphothreonine mark. A compositionally biased stretch (basic and acidic residues) spans 173–185; it reads VGPKDSLAPREEQ. Polar residues predominate over residues 206–216; the sequence is IFSQATATPSQ. The span at 232-244 shows a compositional bias: low complexity; it reads SPSFSSTSETSAK. Residues S234, S309, and S314 each carry the phosphoserine modification. TPR repeat units lie at residues 607–640, 642–675, 682–715, and 716–749; these read GRVLYSMANCLLLMKDYVLAVDAYLTVIKYYPEQ, PQLLSGIGRILLQIGDIKTAEKYFQDVEKVTQKL, IMVLMNRAFLYLGQNNFAEAHKFFTEILRMDPTN, and AVANNNAAVCLLYLGKLKDSLRQLEAMVQQDPRH.

In terms of assembly, component of the multisubunit TRAPP (transport protein particle) complex, which includes at least TRAPPC2, TRAPPC2L, TRAPPC3, TRAPPC3L, TRAPPC4, TRAPPC5, TRAPPC8, TRAPPC9, TRAPPC10, TRAPPC11 and TRAPPC12. Interacts with CENPE. Post-translationally, phosphorylated as the cells enter mitosis but is dephosphorylated at or before the onset of anaphase. The phosphorylated form recruits CENPE to kinetochores more efficiently than the non-phosphorylated form.

The protein resides in the endoplasmic reticulum-Golgi intermediate compartment. It is found in the nucleus. Functionally, component of the TRAPP complex, which is involved in endoplasmic reticulum to Golgi apparatus trafficking at a very early stage. Also plays a role in chromosome congression, kinetochore assembly and stability and controls the recruitment of CENPE to the kinetochores. This is Trafficking protein particle complex subunit 12 from Mus musculus (Mouse).